The primary structure comprises 375 residues: DNA replication and repair protein RecF (375 aa).

ATP is bound at residue 30 to 37 (GKNAQGKT).

It belongs to the RecF family.

The protein resides in the cytoplasm. In terms of biological role, the RecF protein is involved in DNA metabolism; it is required for DNA replication and normal SOS inducibility. RecF binds preferentially to single-stranded, linear DNA. It also seems to bind ATP. The polypeptide is DNA replication and repair protein RecF (Lactobacillus acidophilus (strain ATCC 700396 / NCK56 / N2 / NCFM)).